The chain runs to 256 residues: MSDAVVAVGEPLRDLAARLGLAWQAEGDATAALRLAMTPEGLALSGEARHYGAPIRVDFTAGKAAHRRRFGGGRGQLVAKACGLARGVTPSIVDATAGLGRDAFVLATLGAEVLLIERVAAIYALLEDGLGRASANAETAEIAARMRVAQGDAARELASLVARHDIAPQVVHLDPMFPHRDKSALVKKEMRVFRDLAGDDDDAPRLLEAALDVASHRVVVKRPRRAPPIEGPAPHHMLEGKTSRYDLYVHRSLKPE.

S-adenosyl-L-methionine contacts are provided by residues 101–102 (RD), 117–118 (ER), and Asp-174.

It belongs to the methyltransferase superfamily. RsmJ family.

The protein resides in the cytoplasm. The enzyme catalyses guanosine(1516) in 16S rRNA + S-adenosyl-L-methionine = N(2)-methylguanosine(1516) in 16S rRNA + S-adenosyl-L-homocysteine + H(+). In terms of biological role, specifically methylates the guanosine in position 1516 of 16S rRNA. This chain is Ribosomal RNA small subunit methyltransferase J, found in Chromohalobacter salexigens (strain ATCC BAA-138 / DSM 3043 / CIP 106854 / NCIMB 13768 / 1H11).